The sequence spans 109 residues: Putative ankyrin repeat protein L482 (109 aa).

4 ANK repeats span residues tyrosine 1–threonine 26, asparagine 27–serine 56, glutamate 57–serine 86, and asparagine 88–alanine 109.

This chain is Putative ankyrin repeat protein L482, found in Acanthamoeba polyphaga (Amoeba).